A 500-amino-acid polypeptide reads, in one-letter code: Lysine--tRNA ligase (500 aa).

Mg(2+)-binding residues include glutamate 410 and glutamate 417.

The protein belongs to the class-II aminoacyl-tRNA synthetase family. As to quaternary structure, homodimer. Mg(2+) is required as a cofactor.

It is found in the cytoplasm. The catalysed reaction is tRNA(Lys) + L-lysine + ATP = L-lysyl-tRNA(Lys) + AMP + diphosphate. The chain is Lysine--tRNA ligase from Shewanella baltica (strain OS155 / ATCC BAA-1091).